A 500-amino-acid polypeptide reads, in one-letter code: Perfringolysin O (500 aa).

An N-terminal signal peptide occupies residues methionine 1–serine 28. The next 4 membrane-spanning stretches (beta stranded) occupy residues lysine 189–valine 202, valine 209–glutamate 218, serine 287–alanine 296, and lysine 304–serine 316. The short motif at glutamate 458–arginine 468 is the Conserved undecapeptide element. Residues threonine 490–leucine 491 carry the Cholesterol binding motif.

The protein belongs to the cholesterol-dependent cytolysin family. In terms of assembly, modeling based on cryo-EM shows a homooligomeric pore complex containing 38-44 subunits; when inserted in the host membrane.

It is found in the secreted. Its subcellular location is the host cell membrane. In terms of biological role, a cholesterol-dependent toxin that causes cytolysis by forming pores in cholesterol-containing host membranes. After binding to target membranes, the protein assembles into a pre-pore complex. A major conformational change leads to insertion in the host membrane and formation of an oligomeric pore complex. Cholesterol is required for binding to host cell membranes, membrane insertion and pore formation; cholesterol binding is mediated by a Thr-Leu pair in the C-terminus. Can be reversibly inactivated by oxidation. The chain is Perfringolysin O (pfo) from Clostridium perfringens (strain 13 / Type A).